The chain runs to 352 residues: Plant intracellular Ras-group-related LRR protein 1 (352 aa).

The segment at 1-25 (MREMGEKRRRGHLNPAGFAGGLHDH) is disordered. 10 LRR repeats span residues 29–52 (KNEEHKLDMSGMSMDALPHLTMSL), 53–75 (GQVTILDLSNNNLESIPESIIAR), 77–99 (LNVVVLDVRSNQLKSLPNSIGCL), 100–122 (SKLKVLNVSGNLLESLPNTIEEC), 124–146 (ALEELHANFNELTKLPDTLGFEL), 147–169 (HSLRKLSVNSNKLAQLPSSTSHM), 171–192 (ALRALDARLNCLRALPDGLENL), 195–217 (LEALNVSQNFQFLRELPYAVGLL), 218–241 (ASLRELDVSYNSIAALPDSMGCLT), and 243–263 (LARFSAVGNPLVSPPMDVVEQ). The GVYW; degenerate motif lies at 264–271 (GLDAMRAY).

It belongs to the SHOC2 family. In terms of tissue distribution, widely expressed but at a lower level in seedlings and stems.

In terms of biological role, leucine-rich repeat protein that likely mediates protein interactions, possibly in the context of signal transduction. In Oryza sativa subsp. japonica (Rice), this protein is Plant intracellular Ras-group-related LRR protein 1 (IRL1).